The primary structure comprises 354 residues: Guanine nucleotide-binding protein G(o) subunit alpha (354 aa).

Residue Gly-2 is the site of N-myristoyl glycine attachment. The S-palmitoyl cysteine moiety is linked to residue Cys-3. The region spanning 32–354 is the G-alpha domain; the sequence is KDIKLLLLGA…ANNLRGCGLY (323 aa). Positions 35–48 are G1 motif; it reads KLLLLGAGESGKST. GTP-binding positions include 40–47, 176–182, 201–205, 270–273, and Ala-326; these read GAGESGKS, LRTRVKT, DVGGQ, and NKKD. Positions 47 and 182 each coordinate Mg(2+). Residues 174–182 form a G2 motif region; it reads DILRTRVKT. Residues 197 to 206 are G3 motif; the sequence is FKLFDVGGQR. Residues 266–273 are G4 motif; sequence ILFLNKKD. The tract at residues 324-329 is G5 motif; sequence TCATDT.

Belongs to the G-alpha family. G(i/o/t/z) subfamily. G proteins are composed of 3 units; alpha, beta and gamma. The alpha chain contains the guanine nucleotide binding site.

In terms of biological role, guanine nucleotide-binding proteins (G proteins) are involved as modulators or transducers in various transmembrane signaling systems. The G(o) protein function is not clear. In Planorbella trivolvis (Marsh rams-horn), this protein is Guanine nucleotide-binding protein G(o) subunit alpha.